The sequence spans 432 residues: 3-phosphoshikimate 1-carboxyvinyltransferase (432 aa).

3-phosphoshikimate is bound by residues lysine 23, serine 24, and arginine 28. Residue lysine 23 participates in phosphoenolpyruvate binding. Positions 95 and 123 each coordinate phosphoenolpyruvate. Residues serine 167, glutamine 169, aspartate 317, and lysine 344 each contribute to the 3-phosphoshikimate site. Glutamine 169 contacts phosphoenolpyruvate. Residue aspartate 317 is the Proton acceptor of the active site. The phosphoenolpyruvate site is built by arginine 348 and arginine 390.

This sequence belongs to the EPSP synthase family. In terms of assembly, monomer.

The protein resides in the cytoplasm. The catalysed reaction is 3-phosphoshikimate + phosphoenolpyruvate = 5-O-(1-carboxyvinyl)-3-phosphoshikimate + phosphate. Its pathway is metabolic intermediate biosynthesis; chorismate biosynthesis; chorismate from D-erythrose 4-phosphate and phosphoenolpyruvate: step 6/7. In terms of biological role, catalyzes the transfer of the enolpyruvyl moiety of phosphoenolpyruvate (PEP) to the 5-hydroxyl of shikimate-3-phosphate (S3P) to produce enolpyruvyl shikimate-3-phosphate and inorganic phosphate. This chain is 3-phosphoshikimate 1-carboxyvinyltransferase, found in Staphylococcus aureus (strain COL).